Reading from the N-terminus, the 170-residue chain is Cyclic pyranopterin monophosphate synthase (170 aa).

Substrate contacts are provided by residues 75-77 (MCH) and 115-116 (ME). Aspartate 130 is a catalytic residue.

It belongs to the MoaC family. Homohexamer; trimer of dimers.

The catalysed reaction is (8S)-3',8-cyclo-7,8-dihydroguanosine 5'-triphosphate = cyclic pyranopterin phosphate + diphosphate. The protein operates within cofactor biosynthesis; molybdopterin biosynthesis. Catalyzes the conversion of (8S)-3',8-cyclo-7,8-dihydroguanosine 5'-triphosphate to cyclic pyranopterin monophosphate (cPMP). The polypeptide is Cyclic pyranopterin monophosphate synthase (Bacillus velezensis (strain DSM 23117 / BGSC 10A6 / LMG 26770 / FZB42) (Bacillus amyloliquefaciens subsp. plantarum)).